Reading from the N-terminus, the 785-residue chain is Endonuclease MutS2 (785 aa).

335 to 342 (GPNTGGKT) is a binding site for ATP. The 76-residue stretch at 710 to 785 (LDLRGERYED…GNGVTIVEFK (76 aa)) folds into the Smr domain.

Belongs to the DNA mismatch repair MutS family. MutS2 subfamily. As to quaternary structure, homodimer. Binds to stalled ribosomes, contacting rRNA.

Its function is as follows. Endonuclease that is involved in the suppression of homologous recombination and thus may have a key role in the control of bacterial genetic diversity. Acts as a ribosome collision sensor, splitting the ribosome into its 2 subunits. Detects stalled/collided 70S ribosomes which it binds and splits by an ATP-hydrolysis driven conformational change. Acts upstream of the ribosome quality control system (RQC), a ribosome-associated complex that mediates the extraction of incompletely synthesized nascent chains from stalled ribosomes and their subsequent degradation. Probably generates substrates for RQC. The sequence is that of Endonuclease MutS2 from Listeria monocytogenes serotype 4b (strain CLIP80459).